The chain runs to 743 residues: Catalase-peroxidase (743 aa).

A disordered region spans residues 1-21; that stretch reads MSENHETVVSELNEESGGGCP. A cross-link (tryptophyl-tyrosyl-methioninium (Trp-Tyr) (with M-257)) is located at residues 108-231; that stretch reads WHSAGTYRIS…LGAVQMGLIY (124 aa). The Proton acceptor role is filled by histidine 109. The segment at residues 231–257 is a cross-link (tryptophyl-tyrosyl-methioninium (Tyr-Met) (with W-108)); the sequence is YVNPEGPNGTPDPLAAARDIRETFRRM. A heme b-binding site is contributed by histidine 272. The disordered stretch occupies residues 275-296; it reads GKTHGAGDPDNVGPEPEGAPLE.

It belongs to the peroxidase family. Peroxidase/catalase subfamily. As to quaternary structure, homodimer or homotetramer. It depends on heme b as a cofactor. In terms of processing, formation of the three residue Trp-Tyr-Met cross-link is important for the catalase, but not the peroxidase activity of the enzyme.

It carries out the reaction H2O2 + AH2 = A + 2 H2O. It catalyses the reaction 2 H2O2 = O2 + 2 H2O. Bifunctional enzyme with both catalase and broad-spectrum peroxidase activity. This Parafrankia sp. (strain EAN1pec) protein is Catalase-peroxidase.